The following is a 340-amino-acid chain: Uroporphyrinogen decarboxylase (340 aa).

Residues 23 to 27 (RQAGR), Asp72, Tyr147, Thr202, and His316 contribute to the substrate site.

Belongs to the uroporphyrinogen decarboxylase family. Homodimer.

It is found in the cytoplasm. It carries out the reaction uroporphyrinogen III + 4 H(+) = coproporphyrinogen III + 4 CO2. The protein operates within porphyrin-containing compound metabolism; protoporphyrin-IX biosynthesis; coproporphyrinogen-III from 5-aminolevulinate: step 4/4. In terms of biological role, catalyzes the decarboxylation of four acetate groups of uroporphyrinogen-III to yield coproporphyrinogen-III. The chain is Uroporphyrinogen decarboxylase from Geobacter sulfurreducens (strain ATCC 51573 / DSM 12127 / PCA).